The primary structure comprises 143 residues: S-protein homolog 11 (143 aa).

Residues 1–20 (MNCFSFSFIIIVLCAGSSNA) form the signal peptide.

The protein belongs to the plant self-incompatibility (S1) protein family.

The protein localises to the secreted. The sequence is that of S-protein homolog 11 from Arabidopsis thaliana (Mouse-ear cress).